A 300-amino-acid chain; its full sequence is Transcription factor DUO1 (300 aa).

HTH myb-type domains are found at residues 8-64 and 65-116; these read KEEI…RPNL and KNGC…KRLA. 2 DNA-binding regions (H-T-H motif) span residues 36–60 and 89–112; these read WSSI…VNKL and WARI…SSRQ. A compositionally biased stretch (low complexity) spans 123–135; that stretch reads SDASSSSFNPKSS. The disordered stretch occupies residues 123-145; it reads SDASSSSFNPKSSSSHRLKGKNV. The segment covering 136–145 has biased composition (basic residues); that stretch reads SSHRLKGKNV.

As to expression, confined to inflorescences, especially in stamens and pollen.

The protein localises to the nucleus. Transcription activator that acts as a positive regulator of male germline development by promoting both gametic cell specification and cell cycle progression. Binds to canonical MYB sites 5'-AACCGTC-3', 5'-AAACCGC-3' and 5'-AACCGT-3' in promoters to trigger the expression of male germline-specific or enriched genes (e.g. MGH3, GEX2 and GCS1), including those required for fertilization. Required for sperm cell specification leading to pollen maturation by activating a germline-specific regulon. Involved in pollen mitosis entry at G2-M transition via the regulation of CYCB1-1, DAZ1 and DAZ2 expression. This Arabidopsis thaliana (Mouse-ear cress) protein is Transcription factor DUO1.